Here is a 316-residue protein sequence, read N- to C-terminus: tRNA methyltransferase 10 homolog B (316 aa).

Residues 73–97 (EKIVAAKKSKRKQEKERRKANRAEN) are a coiled coil. Residues 77 to 98 (AAKKSKRKQEKERRKANRAENP) form a disordered region. One can recognise an SAM-dependent MTase TRM10-type domain in the interval 113-310 (TKDKLLEAKH…KGVSSGKGYI (198 aa)).

It belongs to the class IV-like SAM-binding methyltransferase superfamily. TRM10 family.

It catalyses the reaction guanosine(9) in tRNA + S-adenosyl-L-methionine = N(1)-methylguanosine(9) in tRNA + S-adenosyl-L-homocysteine + H(+). Functionally, S-adenosyl-L-methionine-dependent guanine N(1)-methyltransferase that catalyzes the formation of N(1)-methylguanine at position 9 (m1G9) in tRNAs. Probably not able to catalyze formation of N(1)-methyladenine at position 9 (m1A9) in tRNAs. The polypeptide is tRNA methyltransferase 10 homolog B (TRMT10B) (Homo sapiens (Human)).